Here is a 319-residue protein sequence, read N- to C-terminus: Transaldolase (319 aa).

Lys-131 (schiff-base intermediate with substrate) is an active-site residue.

This sequence belongs to the transaldolase family. Type 1 subfamily. As to quaternary structure, homodimer.

The protein localises to the cytoplasm. It catalyses the reaction D-sedoheptulose 7-phosphate + D-glyceraldehyde 3-phosphate = D-erythrose 4-phosphate + beta-D-fructose 6-phosphate. Its pathway is carbohydrate degradation; pentose phosphate pathway; D-glyceraldehyde 3-phosphate and beta-D-fructose 6-phosphate from D-ribose 5-phosphate and D-xylulose 5-phosphate (non-oxidative stage): step 2/3. Its function is as follows. Transaldolase is important for the balance of metabolites in the pentose-phosphate pathway. This is Transaldolase from Wigglesworthia glossinidia brevipalpis.